The sequence spans 214 residues: Small ribosomal subunit protein uS5 (214 aa).

An S5 DRBM domain is found at 54 to 117 (LRYDIVDIGI…RDAKMRIIPV (64 aa)).

The protein belongs to the universal ribosomal protein uS5 family. As to quaternary structure, part of the 30S ribosomal subunit. Contacts protein S4.

With S4 and S12 plays an important role in translational accuracy. The protein is Small ribosomal subunit protein uS5 of Sulfolobus acidocaldarius (strain ATCC 33909 / DSM 639 / JCM 8929 / NBRC 15157 / NCIMB 11770).